A 300-amino-acid polypeptide reads, in one-letter code: Glutamyl-Q tRNA(Asp) synthetase (300 aa).

Residues 14-18 (RFAPT) and E50 each bind L-glutamate. The 'HIGH' region motif lies at 17–27 (PTPSGFLHFGS). Zn(2+) contacts are provided by C106, C108, Y120, and C124. 2 residues coordinate L-glutamate: Y177 and R195. The 'KMSKS' region motif lies at 233 to 237 (KLGKS). K236 is an ATP binding site.

Belongs to the class-I aminoacyl-tRNA synthetase family. GluQ subfamily. Zn(2+) is required as a cofactor.

In terms of biological role, catalyzes the tRNA-independent activation of glutamate in presence of ATP and the subsequent transfer of glutamate onto a tRNA(Asp). Glutamate is transferred on the 2-amino-5-(4,5-dihydroxy-2-cyclopenten-1-yl) moiety of the queuosine in the wobble position of the QUC anticodon. This chain is Glutamyl-Q tRNA(Asp) synthetase, found in Pseudomonas putida (strain ATCC 700007 / DSM 6899 / JCM 31910 / BCRC 17059 / LMG 24140 / F1).